The following is a 201-amino-acid chain: Large ribosomal subunit protein uL4 (201 aa).

The tract at residues 43 to 69 (TKAQKTRSEVAGGGKKPWRQKGTGRAR) is disordered.

This sequence belongs to the universal ribosomal protein uL4 family. Part of the 50S ribosomal subunit.

Functionally, one of the primary rRNA binding proteins, this protein initially binds near the 5'-end of the 23S rRNA. It is important during the early stages of 50S assembly. It makes multiple contacts with different domains of the 23S rRNA in the assembled 50S subunit and ribosome. Forms part of the polypeptide exit tunnel. This Idiomarina loihiensis (strain ATCC BAA-735 / DSM 15497 / L2-TR) protein is Large ribosomal subunit protein uL4.